The sequence spans 164 residues: 6,7-dimethyl-8-ribityllumazine synthase (164 aa).

Residues phenylalanine 22, 56-58 (AWE), and 80-82 (AVI) contribute to the 5-amino-6-(D-ribitylamino)uracil site. (2S)-2-hydroxy-3-oxobutyl phosphate is bound at residue 85–86 (DT). The active-site Proton donor is histidine 88. A 5-amino-6-(D-ribitylamino)uracil-binding site is contributed by leucine 113. Arginine 127 contacts (2S)-2-hydroxy-3-oxobutyl phosphate.

This sequence belongs to the DMRL synthase family.

It catalyses the reaction (2S)-2-hydroxy-3-oxobutyl phosphate + 5-amino-6-(D-ribitylamino)uracil = 6,7-dimethyl-8-(1-D-ribityl)lumazine + phosphate + 2 H2O + H(+). The protein operates within cofactor biosynthesis; riboflavin biosynthesis; riboflavin from 2-hydroxy-3-oxobutyl phosphate and 5-amino-6-(D-ribitylamino)uracil: step 1/2. In terms of biological role, catalyzes the formation of 6,7-dimethyl-8-ribityllumazine by condensation of 5-amino-6-(D-ribitylamino)uracil with 3,4-dihydroxy-2-butanone 4-phosphate. This is the penultimate step in the biosynthesis of riboflavin. The protein is 6,7-dimethyl-8-ribityllumazine synthase of Gemmatimonas aurantiaca (strain DSM 14586 / JCM 11422 / NBRC 100505 / T-27).